We begin with the raw amino-acid sequence, 156 residues long: MQIIEGKLQLQGNERVAILTSRFNHIITDRLQEGAMDCFKRHGGDEDLLDIVLVPGAYELPFILDKLLESEKYDGVCVLGAIIRGGTPHFDYVSAEATKGIAHAMLKYSMPVSFGVLTTDNIEQAIERAGSKAGNKGFEAMSTLIELLSLCQTLKG.

5-amino-6-(D-ribitylamino)uracil is bound by residues phenylalanine 23, 57–59 (AYE), and 81–83 (AII). A (2S)-2-hydroxy-3-oxobutyl phosphate-binding site is contributed by 86-87 (GT). The active-site Proton donor is histidine 89. Position 114 (phenylalanine 114) interacts with 5-amino-6-(D-ribitylamino)uracil. Arginine 128 lines the (2S)-2-hydroxy-3-oxobutyl phosphate pocket.

The protein belongs to the DMRL synthase family.

The enzyme catalyses (2S)-2-hydroxy-3-oxobutyl phosphate + 5-amino-6-(D-ribitylamino)uracil = 6,7-dimethyl-8-(1-D-ribityl)lumazine + phosphate + 2 H2O + H(+). It functions in the pathway cofactor biosynthesis; riboflavin biosynthesis; riboflavin from 2-hydroxy-3-oxobutyl phosphate and 5-amino-6-(D-ribitylamino)uracil: step 1/2. Functionally, catalyzes the formation of 6,7-dimethyl-8-ribityllumazine by condensation of 5-amino-6-(D-ribitylamino)uracil with 3,4-dihydroxy-2-butanone 4-phosphate. This is the penultimate step in the biosynthesis of riboflavin. This chain is 6,7-dimethyl-8-ribityllumazine synthase, found in Helicobacter pylori (strain ATCC 700392 / 26695) (Campylobacter pylori).